A 691-amino-acid chain; its full sequence is Elongation factor G (691 aa).

The tr-type G domain occupies 8–282 (ERVRNIGIAA…AVIDYLPAPV (275 aa)). GTP is bound by residues 17–24 (AHIDAGKT), 81–85 (DTPGH), and 135–138 (NKMD).

It belongs to the TRAFAC class translation factor GTPase superfamily. Classic translation factor GTPase family. EF-G/EF-2 subfamily.

The protein localises to the cytoplasm. Catalyzes the GTP-dependent ribosomal translocation step during translation elongation. During this step, the ribosome changes from the pre-translocational (PRE) to the post-translocational (POST) state as the newly formed A-site-bound peptidyl-tRNA and P-site-bound deacylated tRNA move to the P and E sites, respectively. Catalyzes the coordinated movement of the two tRNA molecules, the mRNA and conformational changes in the ribosome. In Synechococcus sp. (strain CC9605), this protein is Elongation factor G.